Reading from the N-terminus, the 121-residue chain is Small ribosomal subunit protein uS13 (121 aa).

A disordered region spans residues 91-121 (HRKGLPVRGQRTRTNARTRKGKKKTVAGKKK).

Belongs to the universal ribosomal protein uS13 family. As to quaternary structure, part of the 30S ribosomal subunit. Forms a loose heterodimer with protein S19. Forms two bridges to the 50S subunit in the 70S ribosome.

In terms of biological role, located at the top of the head of the 30S subunit, it contacts several helices of the 16S rRNA. In the 70S ribosome it contacts the 23S rRNA (bridge B1a) and protein L5 of the 50S subunit (bridge B1b), connecting the 2 subunits; these bridges are implicated in subunit movement. Contacts the tRNAs in the A and P-sites. In Treponema denticola (strain ATCC 35405 / DSM 14222 / CIP 103919 / JCM 8153 / KCTC 15104), this protein is Small ribosomal subunit protein uS13.